A 204-amino-acid polypeptide reads, in one-letter code: Small ribosomal subunit protein uS4 (204 aa).

Positions 93–156 constitute an S4 RNA-binding domain; it reads SRLSSVLYHS…AKIPVIVEAV (64 aa).

It belongs to the universal ribosomal protein uS4 family. In terms of assembly, part of the 30S ribosomal subunit. Contacts protein S5. The interaction surface between S4 and S5 is involved in control of translational fidelity.

In terms of biological role, one of the primary rRNA binding proteins, it binds directly to 16S rRNA where it nucleates assembly of the body of the 30S subunit. With S5 and S12 plays an important role in translational accuracy. The chain is Small ribosomal subunit protein uS4 from Wolbachia sp. subsp. Brugia malayi (strain TRS).